A 171-amino-acid polypeptide reads, in one-letter code: Co-chaperone protein HscB (171 aa).

In terms of domain architecture, J spans 2 to 74 (DYFTLFGLPA…LTRAEYLLSL (73 aa)).

Belongs to the HscB family. In terms of assembly, interacts with HscA and stimulates its ATPase activity. Interacts with IscU.

Functionally, co-chaperone involved in the maturation of iron-sulfur cluster-containing proteins. Seems to help targeting proteins to be folded toward HscA. The polypeptide is Co-chaperone protein HscB (Salmonella arizonae (strain ATCC BAA-731 / CDC346-86 / RSK2980)).